Consider the following 741-residue polypeptide: T-box transcription factor TBX3 (741 aa).

The T-box; first part DNA-binding region spans 107 to 220; the sequence is LEAKELWDQF…NNISDKHGFT (114 aa). The segment at residues 241-305 is a DNA-binding region (T-box; second part); it reads ILNSMHKYQP…NNPFAKGFRD (65 aa). Ser-369 is subject to Phosphoserine. The tract at residues 369-469 is disordered; the sequence is SEAESDAEAE…EGPVATKVDE (101 aa). 2 stretches are compositionally biased toward basic and acidic residues: residues 377 to 386 and 420 to 437; these read AESKEEHGPE and SRAR…DSRH. 7 positions are modified to phosphoserine: Ser-432, Ser-438, Ser-456, Ser-705, Ser-736, Ser-738, and Ser-740. Polar residues predominate over residues 438-447; that stretch reads SPATISSSTR.

Interacts with PML. As to expression, in adults, highest levels in lung. Also found in brain, heart, kidney, liver and ovary.

It localises to the nucleus. Functionally, transcriptional repressor involved in developmental processes. Binds to the palindromic T site 5'-TTCACACCTAGGTGTGAA-3' DNA sequence, or a half-site, which are present in the regulatory region of several genes. Probably plays a role in limb pattern formation. Required for mammary placode induction, and maintenance of the mammary buds during development. Involved in branching morphogenesis in both developing lungs and adult mammary glands, via negative modulation of target genes; acting redundantly with TBX2. Required, together with TBX2, to maintain cell proliferation in the embryonic lung mesenchyme; perhaps acting downstream of SHH, BMP and TGFbeta signaling. Involved in modulating early inner ear development, acting independently of, and also redundantly with, TBX2 in different subregions of the developing ear. Acts as a negative regulator of PML function in cellular senescence. The protein is T-box transcription factor TBX3 (Tbx3) of Mus musculus (Mouse).